The following is a 157-amino-acid chain: Endoribonuclease YbeY (157 aa).

Zn(2+) contacts are provided by H114, H118, and H124.

Belongs to the endoribonuclease YbeY family. Zn(2+) is required as a cofactor.

The protein resides in the cytoplasm. Single strand-specific metallo-endoribonuclease involved in late-stage 70S ribosome quality control and in maturation of the 3' terminus of the 16S rRNA. The sequence is that of Endoribonuclease YbeY from Caulobacter vibrioides (strain ATCC 19089 / CIP 103742 / CB 15) (Caulobacter crescentus).